A 171-amino-acid polypeptide reads, in one-letter code: MLQTFPRVAKCVRAYSSKPTLGPKFQSLDEIKEYIFKDTISANEFLTQSERAKDRELPVPPRETVLKLLKLSGLPTKGADIERIQRNLSEQISFINILHDTDLDDSLNVKYARLLPRENATLSYGDLIVRANSGKNSELAEISGSWDSTSRASMRKDGYFIVREEFLDNRD.

Belongs to the GatF family. As to quaternary structure, subunit of the heterotrimeric GatFAB amidotransferase (AdT) complex, composed of A, B and F subunits.

It is found in the mitochondrion inner membrane. The catalysed reaction is L-glutamyl-tRNA(Gln) + L-glutamine + ATP + H2O = L-glutaminyl-tRNA(Gln) + L-glutamate + ADP + phosphate + H(+). Its function is as follows. Allows the formation of correctly charged Gln-tRNA(Gln) through the transamidation of misacylated Glu-tRNA(Gln) in the mitochondria. The reaction takes place in the presence of glutamine and ATP through an activated gamma-phospho-Glu-tRNA(Gln). Required for proper protein synthesis within the mitochondrion. The chain is Glutamyl-tRNA(Gln) amidotransferase subunit F, mitochondrial from Zygosaccharomyces rouxii (strain ATCC 2623 / CBS 732 / NBRC 1130 / NCYC 568 / NRRL Y-229).